The following is a 916-amino-acid chain: Isoleucine--tRNA ligase (916 aa).

The short motif at 57-67 (PYANGNLHMGH) is the 'HIGH' region element. E554 contributes to the L-isoleucyl-5'-AMP binding site. Positions 595–599 (KMSKS) match the 'KMSKS' region motif. Position 598 (K598) interacts with ATP. C885, C888, C905, and C908 together coordinate Zn(2+).

Belongs to the class-I aminoacyl-tRNA synthetase family. IleS type 1 subfamily. Monomer. The cofactor is Zn(2+).

Its subcellular location is the cytoplasm. The enzyme catalyses tRNA(Ile) + L-isoleucine + ATP = L-isoleucyl-tRNA(Ile) + AMP + diphosphate. Its function is as follows. Catalyzes the attachment of isoleucine to tRNA(Ile). As IleRS can inadvertently accommodate and process structurally similar amino acids such as valine, to avoid such errors it has two additional distinct tRNA(Ile)-dependent editing activities. One activity is designated as 'pretransfer' editing and involves the hydrolysis of activated Val-AMP. The other activity is designated 'posttransfer' editing and involves deacylation of mischarged Val-tRNA(Ile). This chain is Isoleucine--tRNA ligase, found in Staphylococcus epidermidis (strain ATCC 12228 / FDA PCI 1200).